The following is a 300-amino-acid chain: GTPase Era (300 aa).

Residues 7-175 (KSGFAVMAGL…KTAVAETLPF (169 aa)) enclose the Era-type G domain. Positions 15–22 (GLPNAGKS) are G1. Position 15–22 (15–22 (GLPNAGKS)) interacts with GTP. The tract at residues 41–45 (QMTRQ) is G2. Residues 62-65 (DTPG) are G3. GTP is bound by residues 62 to 66 (DTPGF) and 124 to 127 (NKAD). Residues 124-127 (NKAD) are G4. Residues 154–156 (ISA) form a G5 region. The region spanning 198 to 283 (IREQIFNLYE…RLELEVSVEP (86 aa)) is the KH type-2 domain.

This sequence belongs to the TRAFAC class TrmE-Era-EngA-EngB-Septin-like GTPase superfamily. Era GTPase family. In terms of assembly, monomer.

It is found in the cytoplasm. Its subcellular location is the cell inner membrane. Functionally, an essential GTPase that binds both GDP and GTP, with rapid nucleotide exchange. Plays a role in 16S rRNA processing and 30S ribosomal subunit biogenesis and possibly also in cell cycle regulation and energy metabolism. This is GTPase Era from Elusimicrobium minutum (strain Pei191).